Reading from the N-terminus, the 622-residue chain is Chromosomal replication initiator protein DnaA (622 aa).

The interval Met1–Ala99 is domain I, interacts with DnaA modulators. The disordered stretch occupies residues Asp88–Arg282. A domain II region spans residues Pro100 to Ala281. Basic and acidic residues-rich tracts occupy residues Gln118–Asp137 and Gly176–Arg210. Residues Pro250–Val262 are compositionally biased toward gly residues. The segment at Arg282 to Ala498 is domain III, AAA+ region. Residues Gly326, Gly328, Lys329, and Thr330 each coordinate ATP. Residues Ser499 to Gly622 form a domain IV, binds dsDNA region.

Belongs to the DnaA family. Oligomerizes as a right-handed, spiral filament on DNA at oriC.

The protein localises to the cytoplasm. Functionally, plays an essential role in the initiation and regulation of chromosomal replication. ATP-DnaA binds to the origin of replication (oriC) to initiate formation of the DNA replication initiation complex once per cell cycle. Binds the DnaA box (a 9 base pair repeat at the origin) and separates the double-stranded (ds)DNA. Forms a right-handed helical filament on oriC DNA; dsDNA binds to the exterior of the filament while single-stranded (ss)DNA is stabiized in the filament's interior. The ATP-DnaA-oriC complex binds and stabilizes one strand of the AT-rich DNA unwinding element (DUE), permitting loading of DNA polymerase. After initiation quickly degrades to an ADP-DnaA complex that is not apt for DNA replication. Binds acidic phospholipids. The protein is Chromosomal replication initiator protein DnaA of Streptomyces griseus subsp. griseus (strain JCM 4626 / CBS 651.72 / NBRC 13350 / KCC S-0626 / ISP 5235).